The sequence spans 239 residues: Phosphoribosylaminoimidazole-succinocarboxamide synthase (239 aa).

It belongs to the SAICAR synthetase family.

The catalysed reaction is 5-amino-1-(5-phospho-D-ribosyl)imidazole-4-carboxylate + L-aspartate + ATP = (2S)-2-[5-amino-1-(5-phospho-beta-D-ribosyl)imidazole-4-carboxamido]succinate + ADP + phosphate + 2 H(+). The protein operates within purine metabolism; IMP biosynthesis via de novo pathway; 5-amino-1-(5-phospho-D-ribosyl)imidazole-4-carboxamide from 5-amino-1-(5-phospho-D-ribosyl)imidazole-4-carboxylate: step 1/2. This Bacillus thuringiensis subsp. konkukian (strain 97-27) protein is Phosphoribosylaminoimidazole-succinocarboxamide synthase.